The chain runs to 375 residues: Lipid-A-disaccharide synthase (375 aa).

Belongs to the LpxB family.

It catalyses the reaction a lipid X + a UDP-2-N,3-O-bis[(3R)-3-hydroxyacyl]-alpha-D-glucosamine = a lipid A disaccharide + UDP + H(+). It functions in the pathway bacterial outer membrane biogenesis; LPS lipid A biosynthesis. Functionally, condensation of UDP-2,3-diacylglucosamine and 2,3-diacylglucosamine-1-phosphate to form lipid A disaccharide, a precursor of lipid A, a phosphorylated glycolipid that anchors the lipopolysaccharide to the outer membrane of the cell. The polypeptide is Lipid-A-disaccharide synthase (Pseudomonas putida (strain GB-1)).